A 378-amino-acid chain; its full sequence is Glutamate 5-kinase (378 aa).

Lys21 is a binding site for ATP. Substrate-binding residues include Ser61, Asp148, and Asn160. An ATP-binding site is contributed by 180 to 181; that stretch reads TD. The region spanning 286 to 364 is the PUA domain; it reads RGTLVLDAGA…RRIEELLGYM (79 aa).

The protein belongs to the glutamate 5-kinase family.

The protein resides in the cytoplasm. The catalysed reaction is L-glutamate + ATP = L-glutamyl 5-phosphate + ADP. It functions in the pathway amino-acid biosynthesis; L-proline biosynthesis; L-glutamate 5-semialdehyde from L-glutamate: step 1/2. Functionally, catalyzes the transfer of a phosphate group to glutamate to form L-glutamate 5-phosphate. The chain is Glutamate 5-kinase from Chromohalobacter salexigens (strain ATCC BAA-138 / DSM 3043 / CIP 106854 / NCIMB 13768 / 1H11).